A 225-amino-acid polypeptide reads, in one-letter code: Enolase-phosphatase E1 (225 aa).

Belongs to the HAD-like hydrolase superfamily. MasA/MtnC family. In terms of assembly, monomer. Mg(2+) is required as a cofactor.

It catalyses the reaction 5-methylsulfanyl-2,3-dioxopentyl phosphate + H2O = 1,2-dihydroxy-5-(methylsulfanyl)pent-1-en-3-one + phosphate. The protein operates within amino-acid biosynthesis; L-methionine biosynthesis via salvage pathway; L-methionine from S-methyl-5-thio-alpha-D-ribose 1-phosphate: step 3/6. It participates in amino-acid biosynthesis; L-methionine biosynthesis via salvage pathway; L-methionine from S-methyl-5-thio-alpha-D-ribose 1-phosphate: step 4/6. Its function is as follows. Bifunctional enzyme that catalyzes the enolization of 2,3-diketo-5-methylthiopentyl-1-phosphate (DK-MTP-1-P) into the intermediate 2-hydroxy-3-keto-5-methylthiopentenyl-1-phosphate (HK-MTPenyl-1-P), which is then dephosphorylated to form the acireductone 1,2-dihydroxy-3-keto-5-methylthiopentene (DHK-MTPene). This Shewanella loihica (strain ATCC BAA-1088 / PV-4) protein is Enolase-phosphatase E1.